The following is a 440-amino-acid chain: tRNA(Ile)-lysidine synthase (440 aa).

29–34 (SGGLDS) contributes to the ATP binding site.

Belongs to the tRNA(Ile)-lysidine synthase family.

It is found in the cytoplasm. The enzyme catalyses cytidine(34) in tRNA(Ile2) + L-lysine + ATP = lysidine(34) in tRNA(Ile2) + AMP + diphosphate + H(+). Ligates lysine onto the cytidine present at position 34 of the AUA codon-specific tRNA(Ile) that contains the anticodon CAU, in an ATP-dependent manner. Cytidine is converted to lysidine, thus changing the amino acid specificity of the tRNA from methionine to isoleucine. The protein is tRNA(Ile)-lysidine synthase of Pectobacterium atrosepticum (strain SCRI 1043 / ATCC BAA-672) (Erwinia carotovora subsp. atroseptica).